We begin with the raw amino-acid sequence, 701 residues long: Glycine--tRNA ligase beta subunit (701 aa).

The protein belongs to the class-II aminoacyl-tRNA synthetase family. Tetramer of two alpha and two beta subunits.

The protein localises to the cytoplasm. It catalyses the reaction tRNA(Gly) + glycine + ATP = glycyl-tRNA(Gly) + AMP + diphosphate. The protein is Glycine--tRNA ligase beta subunit of Thiobacillus denitrificans (strain ATCC 25259 / T1).